A 422-amino-acid polypeptide reads, in one-letter code: 5'-deoxyadenosine deaminase (422 aa).

Residues His57 and His59 each coordinate Zn(2+). Residues Glu86 and His178 each coordinate substrate. His205 contacts Zn(2+). Substrate-binding residues include Glu208 and Asp294. Asp294 is a Zn(2+) binding site.

Belongs to the metallo-dependent hydrolases superfamily. MTA/SAH deaminase family. As to quaternary structure, homotetramer. The cofactor is Zn(2+).

The catalysed reaction is 5'-deoxyadenosine + H2O + H(+) = 5'-deoxyinosine + NH4(+). The enzyme catalyses S-adenosyl-L-homocysteine + H2O + H(+) = S-inosyl-L-homocysteine + NH4(+). It catalyses the reaction S-methyl-5'-thioadenosine + H2O + H(+) = S-methyl-5'-thioinosine + NH4(+). It carries out the reaction adenosine + H2O + H(+) = inosine + NH4(+). The protein operates within amino-acid biosynthesis; S-adenosyl-L-methionine biosynthesis. Its function is as follows. Catalyzes the deamination of three SAM-derived enzymatic products, namely 5'-deoxyadenosine, S-adenosyl-L-homocysteine, and 5'-methylthioadenosine, to produce the inosine analogs. Can also deaminate adenosine. The preferred substrate for this enzyme is 5'-deoxyadenosine, but all these substrates are efficiently deaminated. Likely functions in a S-adenosyl-L-methionine (SAM) recycling pathway from S-adenosyl-L-homocysteine (SAH) produced from SAM-dependent methylation reactions. May also be involved in the recycling of 5'-deoxyadenosine, whereupon the 5'-deoxyribose moiety of 5'-deoxyinosine is further metabolized to deoxyhexoses used for the biosynthesis of aromatic amino acids in methanogens. This is 5'-deoxyadenosine deaminase from Methanococcus maripaludis (strain C7 / ATCC BAA-1331).